The following is a 457-amino-acid chain: Phosphomethylpyrimidine synthase (457 aa).

Substrate-binding positions include Asn-80, Met-109, Tyr-139, His-175, 195–197 (SRG), 236–239 (DSLR), and Glu-275. His-279 contributes to the Zn(2+) binding site. Substrate is bound at residue Tyr-302. Position 343 (His-343) interacts with Zn(2+). 3 residues coordinate [4Fe-4S] cluster: Cys-423, Cys-426, and Cys-431.

The protein belongs to the ThiC family. Requires [4Fe-4S] cluster as cofactor.

The enzyme catalyses 5-amino-1-(5-phospho-beta-D-ribosyl)imidazole + S-adenosyl-L-methionine = 4-amino-2-methyl-5-(phosphooxymethyl)pyrimidine + CO + 5'-deoxyadenosine + formate + L-methionine + 3 H(+). It functions in the pathway cofactor biosynthesis; thiamine diphosphate biosynthesis. Its function is as follows. Catalyzes the synthesis of the hydroxymethylpyrimidine phosphate (HMP-P) moiety of thiamine from aminoimidazole ribotide (AIR) in a radical S-adenosyl-L-methionine (SAM)-dependent reaction. The sequence is that of Phosphomethylpyrimidine synthase from Trichormus variabilis (strain ATCC 29413 / PCC 7937) (Anabaena variabilis).